A 125-amino-acid chain; its full sequence is Immunoglobulin heavy variable 4-39 (125 aa).

Residues 1-26 (MDLMCKKMKHLWFFLLLVAAPRWVLS) form the signal peptide. The interval 27–51 (QLQLQESGPGLVKPSETLSLTCTVS) is framework-1. Residues 27-125 (QLQLQESGPG…ADTAVYYCAR (99 aa)) enclose the Ig-like domain. The cysteines at positions 48 and 123 are disulfide-linked. A complementarity-determining-1 region spans residues 52-61 (GGSISSSSYY). Residues 62-78 (WGWIRQPPGKGLEWIGS) are framework-2. Residues 79–85 (IYYSGST) are complementarity-determining-2. The tract at residues 86–123 (YYNPSLKSRVTISVDTSKNQFSLKLSSVTAADTAVYYC) is framework-3. Residues 124-125 (AR) form a complementarity-determining-3 region.

As to quaternary structure, immunoglobulins are composed of two identical heavy chains and two identical light chains; disulfide-linked.

It localises to the secreted. The protein localises to the cell membrane. Its function is as follows. V region of the variable domain of immunoglobulin heavy chains that participates in the antigen recognition. Immunoglobulins, also known as antibodies, are membrane-bound or secreted glycoproteins produced by B lymphocytes. In the recognition phase of humoral immunity, the membrane-bound immunoglobulins serve as receptors which, upon binding of a specific antigen, trigger the clonal expansion and differentiation of B lymphocytes into immunoglobulins-secreting plasma cells. Secreted immunoglobulins mediate the effector phase of humoral immunity, which results in the elimination of bound antigens. The antigen binding site is formed by the variable domain of one heavy chain, together with that of its associated light chain. Thus, each immunoglobulin has two antigen binding sites with remarkable affinity for a particular antigen. The variable domains are assembled by a process called V-(D)-J rearrangement and can then be subjected to somatic hypermutations which, after exposure to antigen and selection, allow affinity maturation for a particular antigen. The protein is Immunoglobulin heavy variable 4-39 of Homo sapiens (Human).